The chain runs to 341 residues: MDTVRIAVVGAGVMGLSTAVCISKMVPGCSITVISDKFTPETTSDVAAGMLIPPTYPDTPIQKQKQWFKETFDHLFAIVNSAEAEDAGVILVSGWQIFQSIPTEEVPYWADVVLGFRKMTKDELKKFPQHVFGHAFTTLKCEGPAYLPWLQKRVKGNGGLILTRRIEDLWELHPSFDIVVNCSGLGSRQLAGDSKIFPVRGQVLKVQAPWVKHFIRDSSGLTYIYPGISNVTLGGTRQKGDWNLSPDAEISKEILSRCCALEPSLRGAYDLREKVGLRPTRPGVRLEKELLAQDSRRLPVVHHYGHGSGGIAMHWGTALEATRLVNECVQVLRTPAPKSKL.

Met-1 carries the post-translational modification Blocked amino end (Met). Asp-36, Lys-37, Thr-43, Ser-44, Met-50, Gly-307, and Ile-311 together coordinate FAD. A Microbody targeting signal motif is present at residues 339 to 341; sequence SKL.

It belongs to the DAMOX/DASOX family. As to quaternary structure, monomer. Interacts with PEX5; the interaction is direct and required for localization of DDO to the peroxisome. The cofactor is FAD. In terms of tissue distribution, in the kidney, expressed in epithelial cells of the proximal tubules and in the liver (at protein level).

Its subcellular location is the peroxisome matrix. It is found in the cytoplasm. The protein localises to the cytosol. The enzyme catalyses D-aspartate + O2 + H2O = oxaloacetate + H2O2 + NH4(+). It carries out the reaction D-glutamate + O2 + H2O = H2O2 + 2-oxoglutarate + NH4(+). Inhibited by phenylglyoxal; chemical modification of arginine residues in the enzyme with phenylglyoxal leads to the irreversible loss of activity towards dicarboxylic D-amino acids, paralleled by a transient appearance of activity versus monocarboxylic ones. Selectively catalyzes the oxidative deamination of acidic amino acids. Suppresses the level of D-aspartate in the brain, an amino acid that can act as an agonist for glutamate receptors. Protects the organism from the toxicity of D-amino acids. May also function in the intestine. The sequence is that of D-aspartate oxidase (DDO) from Bos taurus (Bovine).